Consider the following 282-residue polypeptide: Protease HtpX homolog (282 aa).

The next 2 membrane-spanning stretches (helical) occupy residues T6–G26 and G29–H49. H130 contributes to the Zn(2+) binding site. E131 is a catalytic residue. Position 134 (H134) interacts with Zn(2+). The next 2 helical transmembrane spans lie at I140–A160 and I180–I200. Residue E205 coordinates Zn(2+).

It belongs to the peptidase M48B family. Zn(2+) serves as cofactor.

Its subcellular location is the cell inner membrane. In Thermodesulfovibrio yellowstonii (strain ATCC 51303 / DSM 11347 / YP87), this protein is Protease HtpX homolog.